Reading from the N-terminus, the 338-residue chain is MSTLRLLISDSYDPWFNLAVEECIFRQMPATQRVLFLWRNADTVVIGRAQNPWKECNTRRMEEDNVRLARRSSGGGAVFHDLGNTCFTFMAGKPEYDKTISTSIVLNALNALGVSAEASGRNDLVVKTAEGDRKVSGSAYRETKDRGFHHGTLLLNADLSRLANYLNPDKKKLAAKGITSVRSRVTNLTELLPGITHEQVCEAITKAFFAHYGERVEAEIISPDKTPDLPNFAETFARQSSWEWNFGQAPAFSHLLDERFSWGGVELHFDVEKGHITRAQVFTDSLNPAPLEALAGRLQGCLYRADMLQQECEALLVDFPDQEKELRELSTWIAGAVR.

The BPL/LPL catalytic domain maps to 29-216 (PATQRVLFLW…AFFAHYGERV (188 aa)). Residues arginine 71, 76–79 (GAVF), and lysine 134 contribute to the ATP site. Lysine 134 is a (R)-lipoate binding site.

It belongs to the LplA family. In terms of assembly, monomer.

The protein localises to the cytoplasm. The enzyme catalyses L-lysyl-[lipoyl-carrier protein] + (R)-lipoate + ATP = N(6)-[(R)-lipoyl]-L-lysyl-[lipoyl-carrier protein] + AMP + diphosphate + H(+). Its pathway is protein modification; protein lipoylation via exogenous pathway; protein N(6)-(lipoyl)lysine from lipoate: step 1/2. It participates in protein modification; protein lipoylation via exogenous pathway; protein N(6)-(lipoyl)lysine from lipoate: step 2/2. Its function is as follows. Catalyzes both the ATP-dependent activation of exogenously supplied lipoate to lipoyl-AMP and the transfer of the activated lipoyl onto the lipoyl domains of lipoate-dependent enzymes. The chain is Lipoate-protein ligase A from Escherichia coli O9:H4 (strain HS).